Here is a 568-residue protein sequence, read N- to C-terminus: Clathrin coat assembly protein AP180B (568 aa).

Positions 1–127 constitute an ENTH domain; that stretch reads MSSLYTKLVK…EEYGRLGMDH (127 aa). The span at 262 to 283 shows a compositional bias: basic and acidic residues; that stretch reads HLREETKRQRGEPSEPQQDRKP. The segment at 262–302 is disordered; the sequence is HLREETKRQRGEPSEPQQDRKPSTAISSTSSHNNNSNDKNK. Residue Lys-282 forms a Glycyl lysine isopeptide (Lys-Gly) (interchain with G-Cter in ubiquitin) linkage. The segment covering 284-298 has biased composition (low complexity); it reads STAISSTSSHNNNSN. Position 449 is a phosphothreonine (Thr-449).

The protein belongs to the AP180 family. Interacts with PAN1 and the clathrin heavy and light chains CHC1 and CLC1.

It is found in the bud. The protein localises to the bud neck. It localises to the cell membrane. The protein resides in the cytoplasm. In terms of biological role, involved in endocytosis and clathrin cage assembly. The polypeptide is Clathrin coat assembly protein AP180B (YAP1802) (Saccharomyces cerevisiae (strain ATCC 204508 / S288c) (Baker's yeast)).